Reading from the N-terminus, the 200-residue chain is Large ribosomal subunit protein uL18 (200 aa).

It belongs to the universal ribosomal protein uL18 family. As to quaternary structure, part of the 50S ribosomal subunit. Contacts the 5S and 23S rRNAs.

Functionally, this is one of the proteins that bind and probably mediate the attachment of the 5S RNA into the large ribosomal subunit, where it forms part of the central protuberance. The protein is Large ribosomal subunit protein uL18 of Thermococcus sibiricus (strain DSM 12597 / MM 739).